A 237-amino-acid polypeptide reads, in one-letter code: MRDNIFTKENDLVNFAFDSQVANVFDDMVKRSVPAYQSMIEMISLSVKTYGQDNTNYYDLGASTGATSIALGINNPHSNNQIIALDNSPDMVKKCQQNLAGKIDNVDVICGDILDMKFENASIIVLNLTLQFIAPNNRQALINRIYKDLNTNGALIISEKIHFNDQQKQKQIAKLHLNFKRANGYSELEITNKRQSIENVLITDSKQTHFKRFNMAGFKNSICHFQCLNFVSFLAVK.

Residues Y36, 61–63 (GAS), 86–87 (DN), 112–113 (DI), N127, and R194 each bind S-adenosyl-L-methionine.

It belongs to the class I-like SAM-binding methyltransferase superfamily. Cx-SAM synthase family. Homodimer.

It catalyses the reaction prephenate + S-adenosyl-L-methionine = carboxy-S-adenosyl-L-methionine + 3-phenylpyruvate + H2O. Catalyzes the conversion of S-adenosyl-L-methionine (SAM) to carboxy-S-adenosyl-L-methionine (Cx-SAM). This is Carboxy-S-adenosyl-L-methionine synthase from Ruthia magnifica subsp. Calyptogena magnifica.